The primary structure comprises 462 residues: Succinate semialdehyde dehydrogenase [NAD(P)+] Sad (462 aa).

Residues 136–137, 160–163, and 212–213 each bind NADP(+); these read WN, KHAP, and GS. E234 serves as the catalytic Proton acceptor. NADP(+) is bound at residue L235. The active-site Nucleophile is C268. E365 is a binding site for NADP(+).

It belongs to the aldehyde dehydrogenase family. In terms of assembly, homodimer.

It carries out the reaction succinate semialdehyde + NAD(+) + H2O = succinate + NADH + 2 H(+). The catalysed reaction is succinate semialdehyde + NADP(+) + H2O = succinate + NADPH + 2 H(+). Its pathway is amino-acid degradation; 4-aminobutanoate degradation. Catalyzes the NAD(+)-dependent oxidation of succinate semialdehyde to succinate. It acts preferentially with NAD as cosubstrate but can also use NADP. Prevents the toxic accumulation of succinate semialdehyde (SSA) and plays an important role when arginine and putrescine are used as the sole nitrogen or carbon sources. This chain is Succinate semialdehyde dehydrogenase [NAD(P)+] Sad (sad), found in Escherichia coli (strain K12).